A 168-amino-acid chain; its full sequence is Mediator of RNA polymerase II transcription subunit 31 (168 aa).

Positions 113–159 are enriched in acidic residues; that stretch reads EGEDQDVEESEEETVENEQKESEDEEDVVIVEKPEDEQEEQAEEAAE. The segment at 113–168 is disordered; the sequence is EGEDQDVEESEEETVENEQKESEDEEDVVIVEKPEDEQEEQAEEAAEPTDTSLLNT.

This sequence belongs to the Mediator complex subunit 31 family. As to quaternary structure, component of the Mediator complex.

It is found in the nucleus. Its function is as follows. Component of the Mediator complex, a coactivator involved in the regulated transcription of nearly all RNA polymerase II-dependent genes. Mediator functions as a bridge to convey information from gene-specific regulatory proteins to the basal RNA polymerase II transcription machinery. Mediator is recruited to promoters by direct interactions with regulatory proteins and serves as a scaffold for the assembly of a functional preinitiation complex with RNA polymerase II and the general transcription factors. The chain is Mediator of RNA polymerase II transcription subunit 31 (mdt-31) from Caenorhabditis briggsae.